Consider the following 206-residue polypeptide: CBS domain-containing protein CBSX3, mitochondrial (206 aa).

A mitochondrion-targeting transit peptide spans Met-1–Ser-39. 2 CBS domains span residues Met-61–Ser-127 and Met-136–Glu-194.

The protein localises to the mitochondrion. This Arabidopsis thaliana (Mouse-ear cress) protein is CBS domain-containing protein CBSX3, mitochondrial (CBSX3).